Reading from the N-terminus, the 205-residue chain is Molybdenum cofactor guanylyltransferase (205 aa).

GTP contacts are provided by residues 14 to 16, lysine 27, aspartate 77, and aspartate 107; that span reads LAG. Mg(2+) is bound at residue aspartate 107.

The protein belongs to the MobA family. Monomer. The cofactor is Mg(2+).

The protein resides in the cytoplasm. It catalyses the reaction Mo-molybdopterin + GTP + H(+) = Mo-molybdopterin guanine dinucleotide + diphosphate. Its function is as follows. Transfers a GMP moiety from GTP to Mo-molybdopterin (Mo-MPT) cofactor (Moco or molybdenum cofactor) to form Mo-molybdopterin guanine dinucleotide (Mo-MGD) cofactor. The chain is Molybdenum cofactor guanylyltransferase from Burkholderia ambifaria (strain ATCC BAA-244 / DSM 16087 / CCUG 44356 / LMG 19182 / AMMD) (Burkholderia cepacia (strain AMMD)).